Consider the following 162-residue polypeptide: NADH-quinone oxidoreductase subunit I (162 aa).

2 4Fe-4S ferredoxin-type domains span residues 53 to 83 and 93 to 122; these read LRRY…IEAE and TRYD…EGPN. Residues C63, C66, C69, C73, C102, C105, C108, and C112 each coordinate [4Fe-4S] cluster.

The protein belongs to the complex I 23 kDa subunit family. NDH-1 is composed of 14 different subunits. Subunits NuoA, H, J, K, L, M, N constitute the membrane sector of the complex. [4Fe-4S] cluster serves as cofactor.

The protein resides in the cell inner membrane. It catalyses the reaction a quinone + NADH + 5 H(+)(in) = a quinol + NAD(+) + 4 H(+)(out). NDH-1 shuttles electrons from NADH, via FMN and iron-sulfur (Fe-S) centers, to quinones in the respiratory chain. The immediate electron acceptor for the enzyme in this species is believed to be ubiquinone. Couples the redox reaction to proton translocation (for every two electrons transferred, four hydrogen ions are translocated across the cytoplasmic membrane), and thus conserves the redox energy in a proton gradient. This chain is NADH-quinone oxidoreductase subunit I, found in Rhodospirillum rubrum (strain ATCC 11170 / ATH 1.1.1 / DSM 467 / LMG 4362 / NCIMB 8255 / S1).